A 132-amino-acid polypeptide reads, in one-letter code: Ribonuclease P protein component 2 (132 aa).

Belongs to the eukaryotic/archaeal RNase P protein component 2 family. Consists of a catalytic RNA component and at least 4-5 protein subunits.

It localises to the cytoplasm. The enzyme catalyses Endonucleolytic cleavage of RNA, removing 5'-extranucleotides from tRNA precursor.. Part of ribonuclease P, a protein complex that generates mature tRNA molecules by cleaving their 5'-ends. This chain is Ribonuclease P protein component 2, found in Methanosarcina acetivorans (strain ATCC 35395 / DSM 2834 / JCM 12185 / C2A).